The chain runs to 367 residues: Germination protease (367 aa).

Positions 1 to 15 are excised as a propeptide; the sequence is MKEPLDLSKYSVRTD.

It belongs to the peptidase A25 family. As to quaternary structure, homotetramer. Post-translationally, autoproteolytically processed. The inactive tetrameric zymogen termed p46 autoprocesses to a smaller form termed p41, which is active only during spore germination.

The enzyme catalyses Endopeptidase action with P4 Glu or Asp, P1 preferably Glu &gt; Asp, P1' hydrophobic and P2' Ala.. Its function is as follows. Initiates the rapid degradation of small, acid-soluble proteins during spore germination. The protein is Germination protease of Bacillus cereus (strain ATCC 10987 / NRS 248).